The following is a 199-amino-acid chain: Recombination protein RecR (199 aa).

The C4-type zinc-finger motif lies at 58–73; it reads CKKCFNLTSEDECEIC. The Toprim domain occupies 81-175; sequence KLICVVSETK…KVTRIAYGLP (95 aa).

It belongs to the RecR family.

Its function is as follows. May play a role in DNA repair. It seems to be involved in an RecBC-independent recombinational process of DNA repair. It may act with RecF and RecO. The chain is Recombination protein RecR from Prochlorococcus marinus (strain AS9601).